An 87-amino-acid chain; its full sequence is uncharacterized protein (87 aa).

To bacteriophage lambda exonuclease exo.

This is an uncharacterized protein from Escherichia coli (strain K12).